A 131-amino-acid polypeptide reads, in one-letter code: Small ribosomal subunit protein uS12 (131 aa).

The disordered stretch occupies residues 1 to 32 (MPTFSQLVRKGRTAPRYKTASPALQGSPQRRG). 3-methylthioaspartic acid is present on aspartate 89. The interval 110 to 131 (RKQGRSKYGAKRAKGGAAAGKK) is disordered. The segment covering 111 to 131 (KQGRSKYGAKRAKGGAAAGKK) has biased composition (basic residues).

Belongs to the universal ribosomal protein uS12 family. In terms of assembly, part of the 30S ribosomal subunit. Contacts proteins S8 and S17. May interact with IF1 in the 30S initiation complex.

Its function is as follows. With S4 and S5 plays an important role in translational accuracy. Functionally, interacts with and stabilizes bases of the 16S rRNA that are involved in tRNA selection in the A site and with the mRNA backbone. Located at the interface of the 30S and 50S subunits, it traverses the body of the 30S subunit contacting proteins on the other side and probably holding the rRNA structure together. The combined cluster of proteins S8, S12 and S17 appears to hold together the shoulder and platform of the 30S subunit. The protein is Small ribosomal subunit protein uS12 of Acidobacterium capsulatum (strain ATCC 51196 / DSM 11244 / BCRC 80197 / JCM 7670 / NBRC 15755 / NCIMB 13165 / 161).